The primary structure comprises 399 residues: MSKAKFERTKPHVNIGTIGHVDHGKTTLTAAITQTMAARGLAEFKAFDQIDNAPEERERGITIATAHVEYQTDTRHYAHVDCPGHADYVKNMITGAAQMDGAILVVSAADGPMPQTREHILLARQVGVPAMVVFLNKADMVDDEELMELVELEVRELLSSYDFPGDDIPIVAGSALKALECGCGKDDCDACKPIIELMNQVDTYIPEPERDIDKPFLMPVEDVFSISGRGTVATGRVESGIVCVQDEIEIVGMKETTKTVVTGVEMFRKLLDQGQAGDNIGVLLRGVKREDIERGQVLAKPGSITPHTKFKAEAYILTKEEGGRHTPFFNGYRPQFYFRTTDVTGICELAEGTEMVMPGDNASMTVNLITPIAMDKELRFAIREGGRTVGAGVVSEVIE.

The 200-residue stretch at 10–209 (KPHVNIGTIG…QVDTYIPEPE (200 aa)) folds into the tr-type G domain. Residues 19–26 (GHVDHGKT) are G1. 19–26 (GHVDHGKT) contributes to the GTP binding site. Residue threonine 26 participates in Mg(2+) binding. A G2 region spans residues 60 to 64 (GITIA). The segment at 81-84 (DCPG) is G3. Residues 81-85 (DCPGH) and 136-139 (NKAD) contribute to the GTP site. Residues 136 to 139 (NKAD) form a G4 region. Residues 174 to 176 (SAL) are G5.

It belongs to the TRAFAC class translation factor GTPase superfamily. Classic translation factor GTPase family. EF-Tu/EF-1A subfamily. Monomer.

The protein resides in the cytoplasm. It catalyses the reaction GTP + H2O = GDP + phosphate + H(+). In terms of biological role, GTP hydrolase that promotes the GTP-dependent binding of aminoacyl-tRNA to the A-site of ribosomes during protein biosynthesis. The sequence is that of Elongation factor Tu 1 from Syntrophotalea carbinolica (strain DSM 2380 / NBRC 103641 / GraBd1) (Pelobacter carbinolicus).